The sequence spans 131 residues: Sec-independent protein translocase protein TatB (131 aa).

A helical membrane pass occupies residues 2–22; that stretch reads FDGIGFMELLLIGVLGLVVLG. The interval 69 to 131 is disordered; it reads NQGLKNLAPE…ENAKSDKPNG (63 aa). Residues 105-123 are compositionally biased toward low complexity; the sequence is AKETPAKETATTETTSTEN.

It belongs to the TatB family. In terms of assembly, the Tat system comprises two distinct complexes: a TatABC complex, containing multiple copies of TatA, TatB and TatC subunits, and a separate TatA complex, containing only TatA subunits. Substrates initially bind to the TatABC complex, which probably triggers association of the separate TatA complex to form the active translocon.

It localises to the cell inner membrane. Its function is as follows. Part of the twin-arginine translocation (Tat) system that transports large folded proteins containing a characteristic twin-arginine motif in their signal peptide across membranes. Together with TatC, TatB is part of a receptor directly interacting with Tat signal peptides. TatB may form an oligomeric binding site that transiently accommodates folded Tat precursor proteins before their translocation. This is Sec-independent protein translocase protein TatB from Shewanella piezotolerans (strain WP3 / JCM 13877).